A 405-amino-acid polypeptide reads, in one-letter code: Plasma serine protease inhibitor (405 aa).

Residues 1 to 19 (MRFFPILCLVLFISHGVAS) form the signal peptide. A propeptide spans 20–24 (RRHSH) (removed in mature form). The N-linked (GlcNAc...) asparagine glycan is linked to Asn247.

This sequence belongs to the serpin family. As to quaternary structure, forms protease inhibiting heterodimers in extracellular body fluids with serine proteases such as activated protein C/coagulation factor V/F5, acrosin/ACR, chymotrypsinogen B/CTRB1, prothrombin/F2, factor Xa/F10, factor XI/F11, kallikrein/KLKB1, tissue kallikrein, trypsin/PRSS1, prostate specific antigen/KLK3, tissue plasminogen activator/PLAT and urinary plasminogen activator/PLAU. Forms membrane-anchored serine proteases inhibiting heterodimers with TMPRSS7 and TMPRSS11E. Interacts with SEMG2. In terms of processing, N-glycosylated; glycans consist of a mixture of sialylated bi- (including sialyl-Lewis X epitopes), tri- and tetra-antennary complex-type chains; affects the maximal heparin- and thrombomodulin-enhanced rates of thrombin inhibition. O-glycosylated; further modified with 2 sialic acid residues. Proteolytically cleaved at the N-terminus; inhibits slightly the heparin- and thrombomodulin-enhanced rates of thrombin inhibition. Post-translationally, proteolytically cleaved. Inhibition of proteases is accompanied by formation of a stable enzyme-inhibitor complex and by degradation of the serpin to lower molecular weight derivatives. Not detected in blood plasma (at protein level). Expressed in testis, epididymis, seminal vesicles, prostate and ovaries.

It localises to the secreted. Its subcellular location is the extracellular space. Its activity is regulated as follows. Its inhibitory activity is greatly enhanced in the presence of glycosaminoglycans, heparin, thrombomodulin and phospholipids vesicles. Functionally, heparin-dependent serine protease inhibitor acting in body fluids and secretions. Inactivates serine proteases by binding irreversibly to their serine activation site. Involved in the regulation of intravascular and extravascular proteolytic activities. Plays hemostatic roles in the blood plasma. Acts as a procoagulant and pro-inflammatory factor by inhibiting the anticoagulant activated protein C factor as well as the generation of activated protein C factor by the thrombin/thrombomodulin complex. Acts as an anticoagulant factor by inhibiting blood coagulation factors like prothrombin, factor XI, factor Xa, plasma kallikrein and fibrinolytic enzymes such as tissue- and urinary-type plasminogen activators. In seminal plasma, inactivates several serine proteases implicated in the reproductive system. Inhibits the serpin acrosin; indirectly protects component of the male genital tract from being degraded by excessive released acrosin. Inhibits tissue- and urinary-type plasminogen activator, prostate-specific antigen and kallikrein activities; has a control on the sperm motility and fertilization. Inhibits the activated protein C-catalyzed degradation of SEMG1 and SEMG2; regulates the degradation of semenogelin during the process of transfer of spermatozoa from the male reproductive tract into the female tract. In urine, inhibits urinary-type plasminogen activator and kallikrein activities. Inactivates membrane-anchored serine proteases activities such as MPRSS7 and TMPRSS11E. Inhibits urinary-type plasminogen activator-dependent tumor cell invasion and metastasis. May also play a non-inhibitory role in seminal plasma and urine as a hydrophobic hormone carrier by its binding to retinoic acid. The chain is Plasma serine protease inhibitor (Serpina5) from Mus musculus (Mouse).